Reading from the N-terminus, the 459-residue chain is Transcription factor AP-2-beta (459 aa).

A Glycyl lysine isopeptide (Lys-Gly) (interchain with G-Cter in SUMO) cross-link involves residue K21. Positions 30–139 (HDGVPSHSSR…PQLSGLDPRR (110 aa)) are disordered. Residues 35–51 (SHSSRLSQLGSVSQGPY) are compositionally biased toward polar residues. Residues 121-132 (LLPQPRAALPQL) show a composition bias toward low complexity. S258 carries the post-translational modification Phosphoserine; by PKA. An H-S-H (helix-span-helix), dimerization region spans residues 299–429 (RRKAANVTLL…YLTEALKGMD (131 aa)). The interval 435-459 (NTTNRHTSGEGPGSKTGDKEEKHRK) is disordered. Residues 450–459 (TGDKEEKHRK) show a composition bias toward basic and acidic residues.

This sequence belongs to the AP-2 family. As to quaternary structure, binds DNA as a dimer. Can form homodimers or heterodimers with other AP-2 family members. Interacts with CITED4. Interacts with UBE2I. Interacts with KCTD1; this interaction represses transcription activation. Interacts with CITED2 (via C-terminus); the interaction stimulates TFAP2B-transcriptional activity. Post-translationally, sumoylated. Sumoylated on Lys-21; which inhibits transcriptional activity. Localizes to neurons in areas of the cerebral cortex, cerebellum and hypothalamus (at protein level).

Its subcellular location is the nucleus. Functionally, sequence-specific DNA-binding protein that interacts with inducible viral and cellular enhancer elements to regulate transcription of selected genes. AP-2 factors bind to the consensus sequence 5'-GCCNNNGGC-3' and activate genes involved in a large spectrum of important biological functions including proper eye, face, body wall, limb and neural tube development. They also suppress a number of genes including MCAM/MUC18, C/EBP alpha and MYC. AP-2-beta appears to be required for normal face and limb development and for proper terminal differentiation and function of renal tubular epithelia. The protein is Transcription factor AP-2-beta (Tfap2b) of Mus musculus (Mouse).